A 447-amino-acid chain; its full sequence is Nuclear envelope integral membrane protein 2 (447 aa).

The signal sequence occupies residues 1-28 (MGPRRLPWARPGPALGLLLLALAGAVPA). 5 helical membrane-spanning segments follow: residues 144–164 (EMLD…FHFA), 173–193 (FFYL…VLLA), 202–222 (STFW…IYCF), 235–255 (IYVL…CYQH), and 275–295 (AFVF…IIAV). The interval 410-438 (TRTESEQDETTSYIHEGDDENEDEIHEPI) is disordered.

Belongs to the NEMP family.

The protein resides in the nucleus inner membrane. The chain is Nuclear envelope integral membrane protein 2 (NEMP2) from Gallus gallus (Chicken).